A 278-amino-acid polypeptide reads, in one-letter code: Lipoyl-[GcvH]:protein N-lipoyltransferase (278 aa).

Residues 44 to 250 (RMAPSTVRGW…SLRHYAGDLV (207 aa)) enclose the BPL/LPL catalytic domain. Cys-149 acts as the Acyl-thioester intermediate in catalysis.

The protein belongs to the octanoyltransferase LipL family.

The catalysed reaction is N(6)-[(R)-lipoyl]-L-lysyl-[glycine-cleavage complex H protein] + L-lysyl-[lipoyl-carrier protein] = L-lysyl-[glycine-cleavage complex H protein] + N(6)-[(R)-lipoyl]-L-lysyl-[lipoyl-carrier protein]. The protein operates within protein modification; protein lipoylation via exogenous pathway. In terms of biological role, catalyzes the amidotransfer (transamidation) of the lipoyl moiety from lipoyl-GcvH to the lipoyl domain of the E2 subunit of lipoate-dependent enzymes. Takes part in a pathway for scavenging of lipoic acid derived from eukaryotic host cells. Cannot use lipoyl-tripeptide (DK(L)A), lipoamide (LD), or free lipoate as substrate. This Listeria monocytogenes serovar 1/2a (strain ATCC BAA-679 / EGD-e) protein is Lipoyl-[GcvH]:protein N-lipoyltransferase.